The chain runs to 400 residues: Formate-dependent phosphoribosylglycinamide formyltransferase (400 aa).

Residues 22–23 and glutamate 82 each bind N(1)-(5-phospho-beta-D-ribosyl)glycinamide; that span reads EL. ATP-binding positions include arginine 115, lysine 157, 162-167, 197-200, and glutamate 205; these read SSGKGQ and EGFI. The 196-residue stretch at 120-315 folds into the ATP-grasp domain; the sequence is RLAAETLGVP…EFELHARAIL (196 aa). Mg(2+)-binding residues include glutamate 274 and glutamate 286. N(1)-(5-phospho-beta-D-ribosyl)glycinamide contacts are provided by residues aspartate 293, lysine 362, and 369–370; that span reads RR.

This sequence belongs to the PurK/PurT family. As to quaternary structure, homodimer.

It carries out the reaction N(1)-(5-phospho-beta-D-ribosyl)glycinamide + formate + ATP = N(2)-formyl-N(1)-(5-phospho-beta-D-ribosyl)glycinamide + ADP + phosphate + H(+). It participates in purine metabolism; IMP biosynthesis via de novo pathway; N(2)-formyl-N(1)-(5-phospho-D-ribosyl)glycinamide from N(1)-(5-phospho-D-ribosyl)glycinamide (formate route): step 1/1. In terms of biological role, involved in the de novo purine biosynthesis. Catalyzes the transfer of formate to 5-phospho-ribosyl-glycinamide (GAR), producing 5-phospho-ribosyl-N-formylglycinamide (FGAR). Formate is provided by PurU via hydrolysis of 10-formyl-tetrahydrofolate. This Variovorax paradoxus (strain S110) protein is Formate-dependent phosphoribosylglycinamide formyltransferase.